Reading from the N-terminus, the 140-residue chain is Small ribosomal subunit protein uS19 (140 aa).

A disordered region spans residues 120 to 140; the sequence is RPKHSAPGIGATRSSAHVSKK. Residues 131-140 show a composition bias toward polar residues; it reads TRSSAHVSKK.

This sequence belongs to the universal ribosomal protein uS19 family.

Functionally, protein S19 forms a complex with S13 that binds strongly to the 16S ribosomal RNA. The protein is Small ribosomal subunit protein uS19 of Nanoarchaeum equitans (strain Kin4-M).